A 204-amino-acid polypeptide reads, in one-letter code: Leucyl/phenylalanyl-tRNA--protein transferase (204 aa).

It belongs to the L/F-transferase family.

Its subcellular location is the cytoplasm. It catalyses the reaction N-terminal L-lysyl-[protein] + L-leucyl-tRNA(Leu) = N-terminal L-leucyl-L-lysyl-[protein] + tRNA(Leu) + H(+). The catalysed reaction is N-terminal L-arginyl-[protein] + L-leucyl-tRNA(Leu) = N-terminal L-leucyl-L-arginyl-[protein] + tRNA(Leu) + H(+). The enzyme catalyses L-phenylalanyl-tRNA(Phe) + an N-terminal L-alpha-aminoacyl-[protein] = an N-terminal L-phenylalanyl-L-alpha-aminoacyl-[protein] + tRNA(Phe). Functions in the N-end rule pathway of protein degradation where it conjugates Leu, Phe and, less efficiently, Met from aminoacyl-tRNAs to the N-termini of proteins containing an N-terminal arginine or lysine. This chain is Leucyl/phenylalanyl-tRNA--protein transferase, found in Rhizobium meliloti (strain 1021) (Ensifer meliloti).